We begin with the raw amino-acid sequence, 156 residues long: 6,7-dimethyl-8-ribityllumazine synthase (156 aa).

5-amino-6-(D-ribitylamino)uracil is bound by residues Phe-22, 56–58 (AME), and 80–82 (AVI). Residue 85 to 86 (ET) participates in (2S)-2-hydroxy-3-oxobutyl phosphate binding. His-88 (proton donor) is an active-site residue. Phe-113 provides a ligand contact to 5-amino-6-(D-ribitylamino)uracil. (2S)-2-hydroxy-3-oxobutyl phosphate is bound at residue Arg-127.

This sequence belongs to the DMRL synthase family.

It carries out the reaction (2S)-2-hydroxy-3-oxobutyl phosphate + 5-amino-6-(D-ribitylamino)uracil = 6,7-dimethyl-8-(1-D-ribityl)lumazine + phosphate + 2 H2O + H(+). It functions in the pathway cofactor biosynthesis; riboflavin biosynthesis; riboflavin from 2-hydroxy-3-oxobutyl phosphate and 5-amino-6-(D-ribitylamino)uracil: step 1/2. Catalyzes the formation of 6,7-dimethyl-8-ribityllumazine by condensation of 5-amino-6-(D-ribitylamino)uracil with 3,4-dihydroxy-2-butanone 4-phosphate. This is the penultimate step in the biosynthesis of riboflavin. This chain is 6,7-dimethyl-8-ribityllumazine synthase, found in Kosmotoga olearia (strain ATCC BAA-1733 / DSM 21960 / TBF 19.5.1).